An 845-amino-acid polypeptide reads, in one-letter code: Envelope glycoprotein B (845 aa).

A signal peptide spans 1-41; it reads MSFTDQTYTRSCMHTCITRDHRLYGIVIISLLLLLDNSVFC. At 42-727 the chain is on the virion surface side; that stretch reads QNENKVIDIK…SGVASFLQNP (686 aa). Cystine bridges form between Cys62/Cys523, Cys80/Cys479, Cys153/Cys218, Cys310/Cys358, and Cys552/Cys591. The interval 120-126 is involved in fusion and/or binding to host membrane; the sequence is RYADVFS. Asn175 carries N-linked (GlcNAc...) asparagine; by host glycosylation. The interval 204–212 is involved in fusion and/or binding to host membrane; sequence LPGTWLRKT. N-linked (GlcNAc...) asparagine; by host glycosylation is found at Asn328, Asn388, Asn414, Asn420, Asn425, Asn564, and Asn632. The segment at 677–725 is hydrophobic membrane proximal region; that stretch reads LEQAIVTKPYVPPAGMQQALQGLSGVGSVITGTLGAMQSLVSGVASFLQ. Residues 728–748 traverse the membrane as a helical segment; it reads FGGTLSIILIGCIIVGVIIIY. Residues 749 to 845 lie on the Intravirion side of the membrane; sequence NRMNQSRGSP…GYTTLSSMNI (97 aa). Residues 837 to 840 carry the Internalization motif motif; sequence YTTL.

Belongs to the herpesviridae glycoprotein B family. Homotrimer; disulfide-linked. Binds to heparan sulfate proteoglycans. Interacts with gH/gL heterodimer. Post-translationally, a proteolytic cleavage by host furin generates two subunits that remain linked by disulfide bonds.

It localises to the virion membrane. Its subcellular location is the host cell membrane. The protein resides in the host endosome membrane. It is found in the host Golgi apparatus membrane. In terms of biological role, envelope glycoprotein that forms spikes at the surface of virion envelope. Essential for the initial attachment to heparan sulfate moieties of the host cell surface proteoglycans. Involved in fusion of viral and cellular membranes leading to virus entry into the host cell. Following initial binding to its host receptors, membrane fusion is mediated by the fusion machinery composed at least of gB and the heterodimer gH/gL. May be involved in the fusion between the virion envelope and the outer nuclear membrane during virion egress. This is Envelope glycoprotein B from Elephas maximus (Indian elephant).